We begin with the raw amino-acid sequence, 857 residues long: Potassium channel AKT1 (857 aa).

Over 1–61 (MRGGALLCGQ…PYDHKYRIWE (61 aa)) the chain is Cytoplasmic. Residues 62–82 (AFLVVLVVYTAWVSPFEFGFL) traverse the membrane as a helical segment. The Extracellular portion of the chain corresponds to 83 to 90 (RKPRPPLS). A helical transmembrane segment spans residues 91–111 (ITDNIVNAFFAIDIIMTFFVG). The Cytoplasmic segment spans residues 112-134 (YLDKSTYLIVDDRKQIAFKYLRS). The helical transmembrane segment at 135–155 (WFLLDLVSTIPSEAAMRISSQ) threads the bilayer. Over 156-158 (SYG) the chain is Extracellular. A helical; Voltage-sensor transmembrane segment spans residues 159-179 (LFNMLRLWRLRRVGALFARLE). Topologically, residues 180-193 (KDRNFNYFWVRCAK) are cytoplasmic. Residues 194 to 214 (LVCVTLFAVHCAACFYYLIAA) form a helical membrane-spanning segment. The Extracellular segment spans residues 215–241 (RNSNPAKTWIGANVANFLEESLWMRYV). An intramembrane region (pore-forming) is located at residues 242-261 (TSMYWSITTLTTVGYGDLHP). The Extracellular portion of the chain corresponds to 262–265 (VNTK). A helical transmembrane segment spans residues 266-286 (EMIFDIFYMLFNLGLTAYLIG). Topologically, residues 287 to 857 (NMTNLVVHGT…GDHLIFATDS (571 aa)) are cytoplasmic. A nucleoside 3',5'-cyclic phosphate is bound at residue 372–493 (LFRGVSNDLL…IMNNLLQHLK (122 aa)). 6 ANK repeats span residues 515–546 (KMDLPLNLCFAAIREDDLLLHQLLKRGLDPNE), 550–579 (NGRTPLHIAASKGTLNCVLLLLEYHADPNC), 583–612 (EGSVPLWEAMVEGHEKVVKVLLEHGSTIDA), 614–643 (DVGHFACTAAEQGNLKLLKEIVLHGGDVTR), 647–676 (TGTSALHTAVCEENIEMVKYLLEQGADVNK), and 680–709 (HGWTPRDLAEQQGHEDIKALFREKLHERRV). Residues 790 to 857 (RVTISCAEKD…GDHLIFATDS (68 aa)) enclose the KHA domain.

It belongs to the potassium channel family. Plant (TC 1.A.1.4) subfamily. In terms of assembly, the potassium channel is probably composed of a homo- or heterotetrameric complex of pore-forming subunits. Possible heteromultimer with AKT2 or KAT3. Part of a K(+)-channel calcium-sensing kinase/phosphatase complex composed by a calcium sensor CBL (CBL1, CBL2, CBL3 or CBL9), a kinase CIPK (CIPK6, CIPK16 or CIPK23), a phosphatase PP2C (AIP1) and a K(+)-channel (AKT1). Interacts directly with AIP1, CBL10, CIPK6, CIPK16 and CIPK23. Post-translationally, phosphorylated by CIPK proteins CIPK6, CIPK16 and CIPK23. The activation by phosphorylation is induced by low K(+) conditions and stimulates K(+) uptake and relocation. Dephosphorylation by AIP1 repressed the transport activity. As to expression, preferentially expressed in the peripheral cell layers of root mature including root cortex and root hairs. Detected also, at a lower level, in the mesophyll of the leaves and at restricted sites corresponding to hydathodes and guard cells.

It localises to the cell membrane. Its function is as follows. Highly selective inward-rectifying potassium channel that mediate potassium uptake by plant roots in response to low K(+) conditions, by a calcium-, CBL-, and CIPK-dependent pathway. Positively regulated by phosphorylation by CIPK23. Negatively regulated by a kinase-independent regulatory mechanism involving a competing direct binding of CBL10. Involved in the stomatal regulation by monitoring the turgor pressure in guard cells. Assuming opened or closed conformations in response to the voltage difference across the membrane, the channel is activated by hyperpolarization. May interact with the cytoskeleton or with regulatory proteins. Is essential with POT5/HAK5 for high-affinity potassium uptake in roots during seedling establishment and postgermination growth under low potassium conditions. This chain is Potassium channel AKT1 (AKT1), found in Arabidopsis thaliana (Mouse-ear cress).